A 332-amino-acid polypeptide reads, in one-letter code: Casein kinase II subunit alpha (332 aa).

The Protein kinase domain maps to 43 to 327; it reads YEIIRKVGRG…TCQEAMAHPY (285 aa). ATP contacts are provided by residues 49 to 57 and lysine 72; that span reads VGRGKYSEV. The Proton acceptor role is filled by aspartate 160.

Belongs to the protein kinase superfamily. Ser/Thr protein kinase family. CK2 subfamily. As to quaternary structure, tetramer composed of two alpha chains, one beta chain and one beta' chain.

It carries out the reaction L-seryl-[protein] + ATP = O-phospho-L-seryl-[protein] + ADP + H(+). The catalysed reaction is L-threonyl-[protein] + ATP = O-phospho-L-threonyl-[protein] + ADP + H(+). In terms of biological role, catalytic subunit of a constitutively active serine/threonine-protein kinase complex that phosphorylates a large number of substrates containing acidic residues C-terminal to the phosphorylated serine or threonine. The protein is Casein kinase II subunit alpha of Schizosaccharomyces pombe (strain 972 / ATCC 24843) (Fission yeast).